The sequence spans 308 residues: Mycothiol acetyltransferase (308 aa).

Residues 1 to 20 are disordered; it reads MTSDDTAQPSGARRIETRPD. N-acetyltransferase domains follow at residues 15–152 and 165–308; these read IETR…RSLT and VTVR…RSET. Position 47 (glutamate 47) interacts with 1D-myo-inositol 2-(L-cysteinylamino)-2-deoxy-alpha-D-glucopyranoside. 91–93 contributes to the acetyl-CoA binding site; that stretch reads LVV. Glutamate 192, lysine 231, and glutamate 240 together coordinate 1D-myo-inositol 2-(L-cysteinylamino)-2-deoxy-alpha-D-glucopyranoside. Residues 244–246 and 251–257 each bind acetyl-CoA; these read VGV and QGGGLGK. Position 278 (tyrosine 278) interacts with 1D-myo-inositol 2-(L-cysteinylamino)-2-deoxy-alpha-D-glucopyranoside.

It belongs to the acetyltransferase family. MshD subfamily. In terms of assembly, monomer.

It catalyses the reaction 1D-myo-inositol 2-(L-cysteinylamino)-2-deoxy-alpha-D-glucopyranoside + acetyl-CoA = mycothiol + CoA + H(+). In terms of biological role, catalyzes the transfer of acetyl from acetyl-CoA to desacetylmycothiol (Cys-GlcN-Ins) to form mycothiol. This Streptomyces scabiei (strain 87.22) protein is Mycothiol acetyltransferase.